The chain runs to 151 residues: Calmodulin (151 aa).

4 consecutive EF-hand domains span residues 10–45 (EQIS…LGQN), 46–81 (PTEA…KMKD), 83–118 (DSEE…LGEK), and 119–151 (LTDE…MLSK). Ca(2+) contacts are provided by Asp23, Asp25, Asp27, Ser29, Glu34, Asp59, Asp61, Asn63, Thr65, Glu70, Asp96, Asp98, Asn100, Glu107, Asp132, Asp134, Asp136, and Glu143.

It belongs to the calmodulin family.

Functionally, calmodulin mediates the control of a large number of enzymes, ion channels and other proteins by Ca(2+). Among the enzymes to be stimulated by the calmodulin-Ca(2+) complex are a number of protein kinases and phosphatases. This chain is Calmodulin, found in Pneumocystis carinii.